The sequence spans 261 residues: Indole-3-glycerol phosphate synthase (261 aa).

Belongs to the TrpC family.

It catalyses the reaction 1-(2-carboxyphenylamino)-1-deoxy-D-ribulose 5-phosphate + H(+) = (1S,2R)-1-C-(indol-3-yl)glycerol 3-phosphate + CO2 + H2O. It functions in the pathway amino-acid biosynthesis; L-tryptophan biosynthesis; L-tryptophan from chorismate: step 4/5. The polypeptide is Indole-3-glycerol phosphate synthase (Campylobacter curvus (strain 525.92)).